The chain runs to 470 residues: Peripherin (470 aa).

The segment at 1-99 (MSHHPSGLRA…FLATRSNEKQ (99 aa)) is head. Tyr17 carries the post-translational modification 3'-nitrotyrosine. 3 positions are modified to phosphoserine: Ser28, Ser50, and Ser59. The region spanning 97-407 (EKQELQELND…KLLEGEESRI (311 aa)) is the IF rod domain. Residues 100–132 (ELQELNDRFANFIEKVRFLEQQNAALRGELSQA) are coil 1A. Residues 133 to 143 (RGQEPARADQL) form a linker 1 region. The interval 144 to 239 (CQQELRELRR…KLHEEELRDL (96 aa)) is coil 1B. The segment at 240–262 (QVSVESQQVQQVEVEATVKPELT) is linker 2. The coil 2 stretch occupies residues 263–405 (AALRDIRAQY…YRKLLEGEES (143 aa)). Tyr379 bears the 3'-nitrotyrosine mark. Positions 406–470 (RISVPVHSFA…ELDKSSAHSY (65 aa)) are tail. The segment at 447–470 (NGEVVTESQKEQRSELDKSSAHSY) is disordered. The segment covering 454-470 (SQKEQRSELDKSSAHSY) has biased composition (basic and acidic residues). Phosphotyrosine is present on Tyr470.

This sequence belongs to the intermediate filament family. In terms of assembly, forms homodimers (in vitro). Homopolymerizes into a filamentous network (in vitro). Forms heterodimers with NEFL, NEFM or NEFH (in vitro). Interacts with DST (via C-terminus). Interacts with RAB7A; the interaction is direct. Interacts with PRKCE (via phorbol-ester/DAG-type 2 domain). Phosphorylated; phosphorylation increases after nerve injury in regenerating neurons. In terms of tissue distribution, expressed in the neurons of the outer hair cells in the organ of Corti and to a lesser extent in type I spiral ganglion cells.

The protein localises to the cytoplasm. It is found in the cytoskeleton. It localises to the cell projection. Its subcellular location is the axon. The protein resides in the perikaryon. Functionally, class-III neuronal intermediate filament protein. May form an independent structural network without the involvement of other neurofilaments or may cooperate with the neuronal intermediate filament proteins NEFL, NEFH, NEFM and INA to form a filamentous network. Assembly of the neuronal intermediate filaments may be regulated by RAB7A. Plays a role in the development of unmyelinated sensory neurons. May be involved in axon elongation and axon regeneration after injury. Inhibits neurite extension in type II spiral ganglion neurons in the cochlea. The polypeptide is Peripherin (PRPH) (Homo sapiens (Human)).